Here is a 158-residue protein sequence, read N- to C-terminus: 2S seed storage albumin protein (158 aa).

The first 21 residues, 1–21 (MTKFTILLISLLFCIAHTCSA), serve as a signal peptide directing secretion. The Cell attachment site motif lies at 54–56 (RGD). Positions 65-81 (NHILRTMRGRINYIRRN) are excised as a propeptide.

The protein belongs to the 2S seed storage albumins family. As to quaternary structure, the protein consists of two chains linked by 2 disulfide bonds. As to expression, expressed in cotyledons. Maximal expression in parenchyma cells undergoing DNA endoreduplication and cell expansion but not in actively dividing cells of the cotyledon.

In terms of biological role, this is a 2S seed storage protein. Its function is as follows. Binds to mammalian chromatin, preventing the normal formation of the kinetochore complex in the centromere and leading to the disruption of mitosis. This chain is 2S seed storage albumin protein, found in Glycine max (Soybean).